A 412-amino-acid chain; its full sequence is Protein arginine N-methyltransferase 2 (412 aa).

The RMT2 domain occupies 190–412 (TAADPDTYLN…YYYHPKISFA (223 aa)). Residues tyrosine 197, methionine 227, 250–255 (FGMGII), 271–273 (EAH), 298–299 (WQ), and aspartate 319 contribute to the S-adenosyl-L-methionine site.

The protein belongs to the class I-like SAM-binding methyltransferase superfamily. RMT2 methyltransferase family. In terms of assembly, monomer.

The protein localises to the cytoplasm. It is found in the nucleus. S-adenosyl-L-methionine-dependent protein-arginine N-methyltransferase that methylates the delta-nitrogen atom of arginine residues to form N5-methylarginine (type IV) in target proteins. Monomethylates ribosomal protein L12. This Candida glabrata (strain ATCC 2001 / BCRC 20586 / JCM 3761 / NBRC 0622 / NRRL Y-65 / CBS 138) (Yeast) protein is Protein arginine N-methyltransferase 2.